The primary structure comprises 30 residues: Trypsin inhibitor 2 (30 aa).

3 disulfides stabilise this stretch: C3-C20, C10-C22, and C16-C29.

It belongs to the protease inhibitor I7 (squash-type serine protease inhibitor) family.

The protein resides in the secreted. In terms of biological role, inhibits trypsin. This Luffa aegyptiaca (Sponge gourd) protein is Trypsin inhibitor 2.